We begin with the raw amino-acid sequence, 618 residues long: Mitochondrial Rho GTPase 2 (618 aa).

Residues 1-591 (MKRDVRILLL…LNAVELGAAS (591 aa)) are Cytoplasmic-facing. Residues 2–168 (KRDVRILLLG…FYYAQKAVLH (167 aa)) form the Miro 1 domain. GTP-binding residues include G16, K17, T18, and S19. T18 is a binding site for Mg(2+). 2 residues coordinate Mg(2+): P35 and D57. Positions 59, 118, 119, 121, 149, and 150 each coordinate GTP. EF-hand domains are found at residues 184-219 (ACSRALTRIFNLSDQDNNQILSDDELNYFQKSCFGN) and 304-339 (LGYQFLQRLFEKHDKDQDGALSPAELQNFFSVFPCM). The Ca(2+) site is built by D197, D199, N201, E208, D317, D319, D321, and E328. In terms of domain architecture, Miro 2 spans 416-579 (RNVFLCKVLG…YTKLATAATF (164 aa)). G428, G430, K431, S432, and A433 together coordinate GTP. Position 432 (S432) interacts with Mg(2+). E474 contributes to the Mg(2+) binding site. 3 residues coordinate GTP: K528, D530, and C559. A helical; Anchor for type IV membrane protein membrane pass occupies residues 592-614 (FWLRVALGAAVTALVGFTLYRVL). At 615–618 (AKNK) the chain is on the mitochondrial intermembrane side.

This sequence belongs to the mitochondrial Rho GTPase family. As to quaternary structure, homodimer.

Its subcellular location is the mitochondrion outer membrane. The catalysed reaction is GTP + H2O = GDP + phosphate + H(+). The enzyme catalyses ATP + H2O = ADP + phosphate + H(+). It catalyses the reaction UTP + H2O = UDP + phosphate + H(+). In terms of biological role, atypical mitochondrial nucleoside-triphosphatase (NTPase) involved in mitochondrial trafficking. Probably involved in control of anterograde transport of mitochondria and their subcellular distribution. Can hydrolyze GTP, ATP and UTP. The sequence is that of Mitochondrial Rho GTPase 2 (RHOT2) from Gallus gallus (Chicken).